A 131-amino-acid chain; its full sequence is SPbeta prophage-derived uncharacterized protein YomZ (131 aa).

In Bacillus subtilis (strain 168), this protein is SPbeta prophage-derived uncharacterized protein YomZ (yomZ).